We begin with the raw amino-acid sequence, 241 residues long: UDP-2,3-diacylglucosamine hydrolase (241 aa).

Mn(2+)-binding residues include aspartate 8, histidine 10, aspartate 41, asparagine 79, and histidine 114. Substrate is bound at residue 79–80; that stretch reads NR. 4 residues coordinate substrate: aspartate 122, lysine 164, lysine 167, and histidine 195. 2 residues coordinate Mn(2+): histidine 195 and histidine 197.

Belongs to the LpxH family. Requires Mn(2+) as cofactor.

It localises to the cell inner membrane. The catalysed reaction is UDP-2-N,3-O-bis[(3R)-3-hydroxytetradecanoyl]-alpha-D-glucosamine + H2O = 2-N,3-O-bis[(3R)-3-hydroxytetradecanoyl]-alpha-D-glucosaminyl 1-phosphate + UMP + 2 H(+). It participates in glycolipid biosynthesis; lipid IV(A) biosynthesis; lipid IV(A) from (3R)-3-hydroxytetradecanoyl-[acyl-carrier-protein] and UDP-N-acetyl-alpha-D-glucosamine: step 4/6. In terms of biological role, hydrolyzes the pyrophosphate bond of UDP-2,3-diacylglucosamine to yield 2,3-diacylglucosamine 1-phosphate (lipid X) and UMP by catalyzing the attack of water at the alpha-P atom. Involved in the biosynthesis of lipid A, a phosphorylated glycolipid that anchors the lipopolysaccharide to the outer membrane of the cell. In Aliivibrio fischeri (strain MJ11) (Vibrio fischeri), this protein is UDP-2,3-diacylglucosamine hydrolase.